Reading from the N-terminus, the 174-residue chain is Protein VdlD (174 aa).

A HotDog ACOT-type domain is found at 20–132 (DRTKLLMSYL…YFTMVAVENG (113 aa)).

Belongs to the acyl coenzyme A hydrolase family.

This is Protein VdlD (vdlD) from Helicobacter pylori (strain J99 / ATCC 700824) (Campylobacter pylori J99).